The following is a 260-amino-acid chain: COP9 signalosome complex subunit 7 (260 aa).

A PCI domain is found at 1 to 159; sequence MDIEQKQAEI…RCFEVPFAAG (159 aa). Residues 228–260 form a disordered region; the sequence is IRGNKEMFGEPSGVMDYEEDGIRPKRRRHPVTR. Residues 251–260 show a composition bias toward basic residues; sequence PKRRRHPVTR.

Belongs to the CSN7/EIF3M family. CSN7 subfamily. Component of the CSN complex, probably composed of CSN1, CSN2, CSN3, CSN4, CSN5 (CSN5A or CSN5B), CSN6 (CSN6A or CSN6B), CSN7 and CSN8. In the CSN complex, it probably interacts directly with CSN4. Interacts (via PCI domain) with CSN1 (via PCI domain) and CSN8 (via PCI domain), and (via C-terminal tail) with CSN6A, TSO2 and RNR2A. Cannot interact simultaneously with CSN1 and CSN8 to form ternary complexes. Also exists as a monomeric form. Binds to the translation initiation factors TIF3E1 and TIF3H1. Phosphorylated.

The protein resides in the cytoplasm. The protein localises to the nucleus. Functionally, component of the COP9 signalosome complex (CSN), a complex involved in various cellular and developmental processes such as photomorphogenesis and auxin and jasmonate responses. The CSN complex is an essential regulator of the ubiquitin (Ubl) conjugation pathway by mediating the deneddylation of the cullin subunits of SCF-type E3 ligase complexes, leading to decrease the Ubl ligase activity of SCF. It is involved in repression of photomorphogenesis in darkness by regulating the activity of COP1-containing Ubl ligase complexes. The complex is also required for degradation of IAA6 by regulating the activity of the Ubl ligase SCF-TIR complex. Regulates the TSO2 subcellular localization. May be involved in nucleic acid binding. This chain is COP9 signalosome complex subunit 7 (CSN7), found in Arabidopsis thaliana (Mouse-ear cress).